A 453-amino-acid polypeptide reads, in one-letter code: Chromosomal replication initiator protein DnaA (453 aa).

Residues 1-76 are domain I, interacts with DnaA modulators; that stretch reads MSGDAAALWP…LAWRQQLPAV (76 aa). The tract at residues 76–115 is domain II; the sequence is VRSVSVRGGVAATERAATLASVPLPTFDAPAAPAANPALL. A domain III, AAA+ region region spans residues 116-333; it reads GFDPRLSFDR…GALNKLLAYA (218 aa). ATP-binding residues include G160, G162, K163, and T164. The domain IV, binds dsDNA stretch occupies residues 334–453; that stretch reads ALTGARIDLM…IAAIRRSLNS (120 aa).

Belongs to the DnaA family. Oligomerizes as a right-handed, spiral filament on DNA at oriC.

Its subcellular location is the cytoplasm. In terms of biological role, plays an essential role in the initiation and regulation of chromosomal replication. ATP-DnaA binds to the origin of replication (oriC) to initiate formation of the DNA replication initiation complex once per cell cycle. Binds the DnaA box (a 9 base pair repeat at the origin) and separates the double-stranded (ds)DNA. Forms a right-handed helical filament on oriC DNA; dsDNA binds to the exterior of the filament while single-stranded (ss)DNA is stabiized in the filament's interior. The ATP-DnaA-oriC complex binds and stabilizes one strand of the AT-rich DNA unwinding element (DUE), permitting loading of DNA polymerase. After initiation quickly degrades to an ADP-DnaA complex that is not apt for DNA replication. Binds acidic phospholipids. The sequence is that of Chromosomal replication initiator protein DnaA from Sphingopyxis alaskensis (strain DSM 13593 / LMG 18877 / RB2256) (Sphingomonas alaskensis).